Consider the following 740-residue polypeptide: Probable RNA-dependent RNA polymerase 1 (740 aa).

It belongs to the RdRP family.

The catalysed reaction is RNA(n) + a ribonucleoside 5'-triphosphate = RNA(n+1) + diphosphate. In terms of biological role, probably involved in the RNA silencing pathway and required for the generation of small interfering RNAs (siRNAs). This Oryza sativa subsp. japonica (Rice) protein is Probable RNA-dependent RNA polymerase 1 (RDR1).